The primary structure comprises 93 residues: Class II hydrophobin 1 (93 aa).

An N-terminal signal peptide occupies residues 1-16 (MKFFAVAALFVASAMA). 4 disulfide bridges follow: cysteine 24-cysteine 74, cysteine 35-cysteine 65, cysteine 36-cysteine 48, and cysteine 75-cysteine 86.

It belongs to the cerato-ulmin hydrophobin family. In terms of assembly, interacts with maize ubiquilin 1-like (UBL) protein. Homotetramer. Further self-assembles to form highly ordered films at water-air interfaces through intermolecular interactions.

The protein resides in the cell membrane. Aerial growth, conidiation, and dispersal of filamentous fungi in the environment rely upon a capability of their secreting small amphipathic proteins called hydrophobins (HPBs) with low sequence identity. Class I can self-assemble into an outermost layer of rodlet bundles on aerial cell surfaces, conferring cellular hydrophobicity that supports fungal growth, development and dispersal; whereas Class II form highly ordered films at water-air interfaces through intermolecular interactions but contribute nothing to the rodlet structure. Hyd1 is a class II hydrophobin that acts as an elicitor of induced systemic resistance (ISR) in plants. During interaction with the plant, binds with the maize target protein UBL in order to recruit more UBL proteins in maize roots to elicit plant defense responses, including cell death as well as brassinosteroid, jasmonate (JA) and ethylene (ET) signaling. This Trichoderma harzianum (Hypocrea lixii) protein is Class II hydrophobin 1.